The sequence spans 327 residues: Microtubule-associated protein RP/EB family member 2 (327 aa).

A disordered region spans residues M1–D21. Phosphoserine is present on S9. Residues T57–D159 form the Calponin-homology (CH) domain. A Phosphotyrosine modification is found at Y167. Disordered stretches follow at residues E171 to L240 and A299 to Y327. The interval Q187 to Y327 is DCTN1-binding. Positions S200–S234 are enriched in low complexity. Phosphoserine is present on S219. Residues S236–H306 form the EB1 C-terminal domain. An APC-binding region spans residues E259–E302. The segment covering S300–H317 has biased composition (basic and acidic residues). Low complexity predominate over residues E318 to Y327.

This sequence belongs to the MAPRE family. As to quaternary structure, interacts with DCTN1. Interacts with APC (via C-terminal). Interacts with monomeric and polymerized tubulin. Interacts with SLAIN1. Interacts (via the N-terminal region) with BAG1.

It localises to the cytoplasm. The protein localises to the cytoskeleton. Its function is as follows. May be involved in microtubule polymerization, and spindle function by stabilizing microtubules and anchoring them at centrosomes. May play a role in cell migration. In Pongo abelii (Sumatran orangutan), this protein is Microtubule-associated protein RP/EB family member 2 (MAPRE2).